The following is a 360-amino-acid chain: Cytoplasmic envelopment protein 2 (360 aa).

The protein belongs to the herpesviridae cytoplasmic envelopment protein 2 family. As to quaternary structure, interacts with cytoplasmic envelopment protein 3 and with the capsid.

The protein localises to the virion tegument. It is found in the host cytoplasm. The protein resides in the host nucleus. Its function is as follows. Plays a critical role in cytoplasmic virus egress. Participates in the final step of tegumentation and envelope acquisition within the host cytoplasm by directly interacting with the capsid. Upon virion binding to target cell, a signaling cascade is triggered to disrupt the interaction with the capsid, thereby preparing capsid uncoating. In Gallus gallus (Chicken), this protein is Cytoplasmic envelopment protein 2 (MDV028).